Reading from the N-terminus, the 613-residue chain is Dihydroxy-acid dehydratase (613 aa).

A Mg(2+)-binding site is contributed by Asp-81. Cys-122 provides a ligand contact to [2Fe-2S] cluster. 2 residues coordinate Mg(2+): Asp-123 and Lys-124. The residue at position 124 (Lys-124) is an N6-carboxylysine. Cys-195 is a [2Fe-2S] cluster binding site. Glu-491 serves as a coordination point for Mg(2+). The active-site Proton acceptor is Ser-517.

Belongs to the IlvD/Edd family. As to quaternary structure, homodimer. It depends on [2Fe-2S] cluster as a cofactor. Mg(2+) serves as cofactor.

The enzyme catalyses (2R)-2,3-dihydroxy-3-methylbutanoate = 3-methyl-2-oxobutanoate + H2O. It carries out the reaction (2R,3R)-2,3-dihydroxy-3-methylpentanoate = (S)-3-methyl-2-oxopentanoate + H2O. The protein operates within amino-acid biosynthesis; L-isoleucine biosynthesis; L-isoleucine from 2-oxobutanoate: step 3/4. Its pathway is amino-acid biosynthesis; L-valine biosynthesis; L-valine from pyruvate: step 3/4. In terms of biological role, functions in the biosynthesis of branched-chain amino acids. Catalyzes the dehydration of (2R,3R)-2,3-dihydroxy-3-methylpentanoate (2,3-dihydroxy-3-methylvalerate) into 2-oxo-3-methylpentanoate (2-oxo-3-methylvalerate) and of (2R)-2,3-dihydroxy-3-methylbutanoate (2,3-dihydroxyisovalerate) into 2-oxo-3-methylbutanoate (2-oxoisovalerate), the penultimate precursor to L-isoleucine and L-valine, respectively. The chain is Dihydroxy-acid dehydratase from Vibrio parahaemolyticus serotype O3:K6 (strain RIMD 2210633).